The primary structure comprises 748 residues: Antigen peptide transporter 1 (748 aa).

Over Met-1–Leu-15 the chain is Cytoplasmic. The chain crosses the membrane as a helical span at residues Pro-16 to Leu-36. At Arg-37–Pro-53 the chain is on the lumenal side. Residues Leu-54–Leu-76 traverse the membrane as a helical segment. Over Arg-77–Trp-92 the chain is Cytoplasmic. A helical transmembrane segment spans residues Leu-93–Phe-113. At Arg-114–Trp-133 the chain is on the lumenal side. The helical transmembrane segment at Gly-134–Trp-154 threads the bilayer. Over His-155–Arg-186 the chain is Cytoplasmic. Residues Leu-187–Phe-207 traverse the membrane as a helical segment. The 284-residue stretch at Leu-187–Lys-470 folds into the ABC transmembrane type-1 domain. Residues Thr-208–Asn-227 are Lumenal-facing. The helical transmembrane segment at Leu-228–Ile-248 threads the bilayer. Topologically, residues Tyr-249 to Ser-298 are cytoplasmic. Residues Leu-299–Ile-319 traverse the membrane as a helical segment. Residues Met-320–Thr-328 are Lumenal-facing. Residues Met-329–Tyr-349 form a helical membrane-spanning segment. Residues Gln-350 to Ser-418 are Cytoplasmic-facing. Residues Pro-375–Met-420 are part of the peptide-binding site. A helical transmembrane segment spans residues Gly-419 to Val-439. Topologically, residues Ser-440 to Asn-443 are lumenal. A helical membrane pass occupies residues Leu-444–Ile-464. Positions Gln-453 to Arg-487 are part of the peptide-binding site. Topologically, residues Tyr-465–Glu-748 are cytoplasmic. The region spanning Val-503–Ala-742 is the ABC transporter domain. ATP is bound by residues Gly-538–Thr-546, Ser-641–Gln-647, and Gln-701. A Mg(2+)-binding site is contributed by Ser-545.

It belongs to the ABC transporter superfamily. ABCB family. MHC peptide exporter (TC 3.A.1.209) subfamily. As to quaternary structure, heterodimer of TAP1 and TAP2 (TAP1-TAP2). A component of the peptide loading complex (PLC), interacts via TAPBP with MHCI heterodimer; this interaction mediates peptide-MHCI assembly. Interacts with PSMB5 and PSMB8. Mg(2+) is required as a cofactor.

It is found in the endoplasmic reticulum membrane. It catalyses the reaction a peptide antigen(in) + ATP + H2O = a peptide antigen(out) + ADP + phosphate + H(+). Its function is as follows. ABC transporter associated with antigen processing. In complex with TAP2 mediates unidirectional translocation of peptide antigens from cytosol to endoplasmic reticulum (ER) for loading onto MHC class I (MHCI) molecules. Uses the chemical energy of ATP to export peptides against the concentration gradient. During the transport cycle alternates between 'inward-facing' state with peptide binding site facing the cytosol to 'outward-facing' state with peptide binding site facing the ER lumen. Peptide antigen binding to ATP-loaded TAP1-TAP2 induces a switch to hydrolysis-competent 'outward-facing' conformation ready for peptide loading onto nascent MHCI molecules. Subsequently ATP hydrolysis resets the transporter to the 'inward facing' state for a new cycle. As a component of the peptide loading complex (PLC), acts as a molecular scaffold essential for peptide-MHCI assembly and antigen presentation. The protein is Antigen peptide transporter 1 (TAP1) of Gorilla gorilla gorilla (Western lowland gorilla).